A 244-amino-acid chain; its full sequence is MRIIVVDNYEEMSKKAAAMMASQVILKPDSVLGLATGDTPIGMYREIINIYKNQKMDFSKVKTFNLDEYYGLNRGNPQSYYYYMMNNLFNYVNIDKNNINIPNGMADNIEVECKEYERKIDKAGGIDLQILGIGVNGHIGFNEPNISFESETHLVNLNEKTIESNSRFFSSKEEVPTKAISMGIKSIIHSKKIILLACGSAKSDAVSKAINGKITPNIPASILQLHRDVVVIIDKEAASKLNLK.

The active-site Proton acceptor; for enolization step is aspartate 67. The active-site For ring-opening step is the asparagine 136. The Proton acceptor; for ring-opening step role is filled by histidine 138. The For ring-opening step role is filled by glutamate 143.

It belongs to the glucosamine/galactosamine-6-phosphate isomerase family. NagB subfamily.

The catalysed reaction is alpha-D-glucosamine 6-phosphate + H2O = beta-D-fructose 6-phosphate + NH4(+). It functions in the pathway amino-sugar metabolism; N-acetylneuraminate degradation; D-fructose 6-phosphate from N-acetylneuraminate: step 5/5. In terms of biological role, catalyzes the reversible isomerization-deamination of glucosamine 6-phosphate (GlcN6P) to form fructose 6-phosphate (Fru6P) and ammonium ion. The polypeptide is Glucosamine-6-phosphate deaminase (Clostridium botulinum (strain 657 / Type Ba4)).